Reading from the N-terminus, the 504-residue chain is Pre-mRNA-processing factor 19 (504 aa).

S2 bears the N-acetylserine mark. The region spanning 2–73 (SLICSISNEV…KPPSATSIPA (72 aa)) is the U-box domain. The may mediate interaction with PSMC5 stretch occupies residues 68–223 (ATSIPAILKA…VGLHSASIPG (156 aa)). N6-acetyllysine occurs at positions 122, 179, 244, and 261. One copy of the WD 1 repeat lies at 219–259 (ASIPGILALDLCPSDTNKILTGGADKNVVVFDKSTEQILAT). WD repeat units follow at residues 262–301 (GHTKKVTSVVFHPSQELVFSASPDATIRIWSVPNTSCVQV), 304–345 (AHES…TKVT), 348–387 (TSGCSLTCAQFHPDGLIFGTGTMDSQIKIWDLKERTNVAN), 390–429 (GHSGPITSIAFSENGYYLATAADDSSVKLWDLRKLKNFKT), 433–472 (DNNFEVKSLIFDQSGTYLALGGTDVQIYICKQWTEILHFT), and 473–503 (EHSGLTTGVAFGHHAKFIASTGMDRSLKFYS).

The protein belongs to the WD repeat PRP19 family. In terms of assembly, homotetramer. Component of activated, catalytic and post-catalytic spliceosomes. Component of the Prp19 complex/PRP19C/Nineteen complex/NTC and related complexes described as PRP19-CDC5L splicing complex and PSO4 complex. A homotetramer of PRPF19, CDC5L, PLRG1 and BCAS2 constitute the core of those complexes. The interaction with CDC5L, PLRG1 and BCAS2 is direct within this core complex. At least three less stably associated proteins CTNNBL1, CWC15 and HSPA8 are found in the Prp19 complex. The Prp19 complex associates with the spliceosome during its assembly and remodeling recruiting additional proteins. Component of the XAB2 complex, a multimeric protein complex composed of XAB2, PRPF19, AQR, ZNF830, ISY1, and PPIE. Interacts with CWC22 and EIF4A3 in an RNA-independent manner. Interacts with RPA1 and RPA2; the PRP19-CDC5L complex is recruited to the sites of DNA repair where it interacts with the replication protein A complex (RPA). Interacts with SETMAR; required for SETMAR recruitment to site of DNA damage. Interacts with U2AF2; the interaction is direct and recruits the Prp19 complex to RNA polymerase II C-terminal domain (CTD) and the pre-mRNA. Interacts with PRPF3. Interacts with APEX1, DNTT and PSMB4. Interacts with KNSTRN. Interacts with PSMC5. Isoform 2 (via N-terminus) interacts with PPIA. Isoform 2 does not interact with CDC5L. Interacts with KHDC4. Interacts with USB1. Interacts with DDX41. In terms of tissue distribution, expressed in white and brown adipose tissues, brain and to a lower extent in liver, kidney, muscle, lung and spleen (at protein level).

It is found in the nucleus. The protein localises to the nucleoplasm. The protein resides in the cytoplasm. Its subcellular location is the cytoskeleton. It localises to the spindle. It is found in the lipid droplet. It carries out the reaction S-ubiquitinyl-[E2 ubiquitin-conjugating enzyme]-L-cysteine + [acceptor protein]-L-lysine = [E2 ubiquitin-conjugating enzyme]-L-cysteine + N(6)-ubiquitinyl-[acceptor protein]-L-lysine.. It participates in protein modification; protein ubiquitination. In terms of biological role, ubiquitin-protein ligase which is a core component of several complexes mainly involved in pre-mRNA splicing and DNA repair. Required for pre-mRNA splicing as component of the spliceosome. Core component of the PRP19C/Prp19 complex/NTC/Nineteen complex which is part of the spliceosome and participates in its assembly, its remodeling and is required for its activity. During assembly of the spliceosome, mediates 'Lys-63'-linked polyubiquitination of the U4 spliceosomal protein PRPF3. Ubiquitination of PRPF3 allows its recognition by the U5 component PRPF8 and stabilizes the U4/U5/U6 tri-snRNP spliceosomal complex. Recruited to RNA polymerase II C-terminal domain (CTD) and the pre-mRNA, it may also couple the transcriptional and spliceosomal machineries. The XAB2 complex, which contains PRPF19, is also involved in pre-mRNA splicing, transcription and transcription-coupled repair. Beside its role in pre-mRNA splicing PRPF19, as part of the PRP19-CDC5L complex, plays a role in the DNA damage response/DDR. It is recruited to the sites of DNA damage by the RPA complex where PRPF19 directly ubiquitinates RPA1 and RPA2. 'Lys-63'-linked polyubiquitination of the RPA complex allows the recruitment of the ATR-ATRIP complex and the activation of ATR, a master regulator of the DNA damage response. May also play a role in DNA double-strand break (DSB) repair by recruiting the repair factor SETMAR to altered DNA. As part of the PSO4 complex may also be involved in the DNA interstrand cross-links/ICLs repair process. In addition, may also mediate 'Lys-48'-linked polyubiquitination of substrates and play a role in proteasomal degradation. May play a role in the biogenesis of lipid droplets. May play a role in neural differentiation possibly through its function as part of the spliceosome. Its function is as follows. Forced expression leads to suppression of neuronal differentiation, and on the contrary to stimulation of astroglial cell differentiation in retinoic acid-primed P19 cells. This Mus musculus (Mouse) protein is Pre-mRNA-processing factor 19.